The following is a 69-amino-acid chain: Conotoxin reg3.6 (69 aa).

The first 20 residues, 1-20 (MMSKLGVLLTICLLLFPLSA), serve as a signal peptide directing secretion. Positions 21-52 (LPLDGDQPADQPAERVQDISPDQNPLFHLVKR) are excised as a propeptide. 3 disulfide bridges follow: C54-C68, C55-C66, and C60-C69.

Belongs to the conotoxin M superfamily. Expressed by the venom duct.

The protein localises to the secreted. In Conus regius (Crown cone), this protein is Conotoxin reg3.6.